A 103-amino-acid polypeptide reads, in one-letter code: SOSS complex subunit C (103 aa).

It belongs to the SOSS-C family. Belongs to the multiprotein complex Integrator. Component of the SOSS complex, composed of soss-b (soss-b1/nabp2 or soss-b2/nabp1), soss-a/ints3 and soss-c/inip.

The protein localises to the nucleus. Its function is as follows. Component of the SOSS complex, a multiprotein complex that functions downstream of the MRN complex to promote DNA repair and G2/M checkpoint. The SOSS complex associates with single-stranded DNA at DNA lesions and influences diverse endpoints in the cellular DNA damage response including cell-cycle checkpoint activation, recombinational repair and maintenance of genomic stability. Required for efficient homologous recombination-dependent repair of double-strand breaks (DSBs). The protein is SOSS complex subunit C (inip) of Danio rerio (Zebrafish).